The sequence spans 485 residues: MATSLARMLKGQVRCYSAPLDMAIPASKQRYIPTTGTYPQGFQVSGTHVGVKASNTRFPDLALIASDTPCSAAAVFTTNKFQAAPVQVSRKTLQSRKGDGIRAVVINSGCANAVTGKGGLEDAVQMGRKVDECSGVENDSSLVMSTGVIGQRLPISKILDRIPTAHSTLASTHEAWLNTARAICTTDTFPKLLSRTFTLPSSPDRSYRLAGMTKGAGMIHPNMATLLGVLCTDAAVEPAALQSILKHAVSRSFNSISIDGDTSTNDTIAVLANGAAGGETVRAPGASASADYTALQGVVTDFAQELSQLVVRDGEGATKFVTVRVRNSPDYESGRMIASTIARSPLVKTALYGKDANWGRILCAVGYTQGVAEGTVVPERTSVSFRPVDGSEVLKLLVNGEPETVDEQRASVILQNEDLEIEVDLGGGEQGAAGCGGEDAVYWFCDFSHECIPAFAVDIIESREISGLKAFGSENAYIYEEEPLK.

4 residues coordinate substrate: Thr-185, Lys-214, Thr-225, and Glu-315. Catalysis depends on Thr-225, which acts as the Nucleophile.

It belongs to the ArgJ family. As to quaternary structure, heterodimer of an alpha and a beta chain. The alpha and beta chains are autoproteolytically processed from a single precursor protein within the mitochondrion.

It is found in the mitochondrion matrix. The catalysed reaction is N(2)-acetyl-L-ornithine + L-glutamate = N-acetyl-L-glutamate + L-ornithine. The enzyme catalyses L-glutamate + acetyl-CoA = N-acetyl-L-glutamate + CoA + H(+). It participates in amino-acid biosynthesis; L-arginine biosynthesis; L-ornithine and N-acetyl-L-glutamate from L-glutamate and N(2)-acetyl-L-ornithine (cyclic): step 1/1. Its pathway is amino-acid biosynthesis; L-arginine biosynthesis; N(2)-acetyl-L-ornithine from L-glutamate: step 1/4. Its function is as follows. Catalyzes two activities which are involved in the cyclic version of arginine biosynthesis: the synthesis of acetylglutamate from glutamate and acetyl-CoA, and of ornithine by transacetylation between acetylornithine and glutamate. In Penicillium rubens (strain ATCC 28089 / DSM 1075 / NRRL 1951 / Wisconsin 54-1255) (Penicillium chrysogenum), this protein is Arginine biosynthesis bifunctional protein ArgJ, mitochondrial.